Consider the following 219-residue polypeptide: Large ribosomal subunit protein uL16 (219 aa).

The protein belongs to the universal ribosomal protein uL16 family. As to quaternary structure, component of the small ribosomal subunit. Mature ribosomes consist of a small (40S) and a large (60S) subunit. The 40S subunit contains about 33 different proteins and 1 molecule of RNA (18S). The 60S subunit contains about 49 different proteins and 3 molecules of RNA (25S, 5.8S and 5S).

This Encephalitozoon cuniculi (strain GB-M1) (Microsporidian parasite) protein is Large ribosomal subunit protein uL16 (RPL10).